Here is a 228-residue protein sequence, read N- to C-terminus: Heptaprenylglyceryl phosphate synthase (228 aa).

Lysine 12 contributes to the sn-glycerol 1-phosphate binding site. Residues aspartate 14 and serine 40 each coordinate Mg(2+). Sn-glycerol 1-phosphate-binding positions include 159–164 (YLEYSG), glycine 189, and 209–210 (GN).

It belongs to the GGGP/HepGP synthase family. Group I subfamily. Homodimer. Mg(2+) is required as a cofactor.

The catalysed reaction is sn-glycerol 1-phosphate + all-trans-heptaprenyl diphosphate = 3-heptaprenyl-sn-glycero-1-phosphate + diphosphate. It functions in the pathway membrane lipid metabolism; glycerophospholipid metabolism. In terms of biological role, prenyltransferase that catalyzes in vivo the transfer of the heptaprenyl moiety of heptaprenyl pyrophosphate (HepPP; 35 carbon atoms) to the C3 hydroxyl of sn-glycerol-1-phosphate (G1P), producing heptaprenylglyceryl phosphate (HepGP). This reaction is an ether-bond-formation step in the biosynthesis of archaea-type G1P-based membrane lipids found in Bacillales. The polypeptide is Heptaprenylglyceryl phosphate synthase (Bacillus licheniformis (strain ATCC 14580 / DSM 13 / JCM 2505 / CCUG 7422 / NBRC 12200 / NCIMB 9375 / NCTC 10341 / NRRL NRS-1264 / Gibson 46)).